A 406-amino-acid chain; its full sequence is Linalool 8-monooxygenase (406 aa).

Position 355 (C355) interacts with heme.

It belongs to the cytochrome P450 family. The cofactor is heme.

The enzyme catalyses linalool + 2 reduced [NADPH--hemoprotein reductase] + 2 O2 = (6E)-8-oxolinalool + 2 oxidized [NADPH--hemoprotein reductase] + 3 H2O + 2 H(+). It functions in the pathway terpene metabolism; linalool degradation. Catalyzes the 8-methyl hydroxylation of linalool. The polypeptide is Linalool 8-monooxygenase (linC) (Pseudomonas putida (Arthrobacter siderocapsulatus)).